We begin with the raw amino-acid sequence, 245 residues long: Leucyl/phenylalanyl-tRNA--protein transferase (245 aa).

It belongs to the L/F-transferase family.

It is found in the cytoplasm. It catalyses the reaction N-terminal L-lysyl-[protein] + L-leucyl-tRNA(Leu) = N-terminal L-leucyl-L-lysyl-[protein] + tRNA(Leu) + H(+). The catalysed reaction is N-terminal L-arginyl-[protein] + L-leucyl-tRNA(Leu) = N-terminal L-leucyl-L-arginyl-[protein] + tRNA(Leu) + H(+). It carries out the reaction L-phenylalanyl-tRNA(Phe) + an N-terminal L-alpha-aminoacyl-[protein] = an N-terminal L-phenylalanyl-L-alpha-aminoacyl-[protein] + tRNA(Phe). Its function is as follows. Functions in the N-end rule pathway of protein degradation where it conjugates Leu, Phe and, less efficiently, Met from aminoacyl-tRNAs to the N-termini of proteins containing an N-terminal arginine or lysine. The chain is Leucyl/phenylalanyl-tRNA--protein transferase from Paraburkholderia phymatum (strain DSM 17167 / CIP 108236 / LMG 21445 / STM815) (Burkholderia phymatum).